Consider the following 114-residue polypeptide: UPF0102 protein HPAG1_0809 (114 aa).

It belongs to the UPF0102 family.

This is UPF0102 protein HPAG1_0809 from Helicobacter pylori (strain HPAG1).